The sequence spans 307 residues: Fructose-bisphosphate aldolase (307 aa).

Residue Ser-49 participates in D-glyceraldehyde 3-phosphate binding. The active-site Proton donor is the Asp-82. 4 residues coordinate Zn(2+): His-83, Asp-104, Glu-134, and His-180. Residue Gly-181 coordinates dihydroxyacetone phosphate. His-210 serves as a coordination point for Zn(2+). Dihydroxyacetone phosphate contacts are provided by residues 211–213 and 253–256; these read GAS and NTDT.

Belongs to the class II fructose-bisphosphate aldolase family. In terms of assembly, homodimer. Requires Zn(2+) as cofactor.

The enzyme catalyses beta-D-fructose 1,6-bisphosphate = D-glyceraldehyde 3-phosphate + dihydroxyacetone phosphate. It participates in carbohydrate degradation; glycolysis; D-glyceraldehyde 3-phosphate and glycerone phosphate from D-glucose: step 4/4. Catalyzes the aldol condensation of dihydroxyacetone phosphate (DHAP or glycerone-phosphate) with glyceraldehyde 3-phosphate (G3P) to form fructose 1,6-bisphosphate (FBP) in gluconeogenesis and the reverse reaction in glycolysis. The sequence is that of Fructose-bisphosphate aldolase (fba) from Helicobacter pylori (strain J99 / ATCC 700824) (Campylobacter pylori J99).